Consider the following 947-residue polypeptide: Nonribosomal peptide synthetase ucdA (947 aa).

The tract at residues 25–413 (YSPHANAGYC…AGPVVFKEYF (389 aa)) is adenylation (A) domain. The Carrier domain maps to 585–665 (APENEFERDL…DLGTALRKLQ (81 aa)). The residue at position 623 (Ser623) is an O-(pantetheine 4'-phosphoryl)serine. Residues 684–934 (PLWLVHPGVG…MLSPEHVFDF (251 aa)) form a thioesterase (TE) domain region.

It belongs to the NRP synthetase family.

It carries out the reaction 2 3-(4-hydroxyphenyl)pyruvate + 2 ATP = atromentin + 2 AMP + 2 diphosphate + H(+). The protein operates within secondary metabolite biosynthesis. Functionally, nonribosomal peptide synthetase that mediates the biosynthesis of usterphenyllins and uscandidusins, p-terphenyl derivatives. Within the pathway, ucdA condenses two 4-hydroxyphenylpyruvate (HPPA) units to produce atromentin. UcdA first activates HPPA through its A domain to AMP-HPPA. The HPPA unit is then loaded to the T domain and eventually transferred to the TE domain. Another HPPA unit is then loaded onto the T domain. The TE domain then catalyzes the condensation of the two HPPA units and the release of atromentin via cyclization. The pathway begin with the biosynthesis of 4-hydroxyphenylpyruvate (HPPA) from L-tyrosine, possibly by the aminotransferase ucdG. The nonribosomal peptide synthetase ucdA then condenses two HPPA units to produce atromentin. The key step in this pathway is the reduction and dehydration of atromentin to form a terphenyl triol intermediate, performed by the NAD-dependent dehydrogenase ucdB. Further O-methylation by the methyltransferase ucdC forms terphenyllin carrying two methoxy moieties at C-9 and C-12, and subsequent dihydroxylation at C-3 of ring A and C-15 of ring C by the flavin-dependent oxygenase ucdD leads to 3,15-dihydroxyterphenyllin. Prenylation by ucdE at position C-5 of ring A forms usterphenyllin B, and is followed by a second prenylation at position C-14 of ring C to form usterphenyllin A. The following furan ring formation that leads to uscandidusins A and B was proven to be an unexpected spontaneous non-enzymatic reaction. In Aspergillus ustus, this protein is Nonribosomal peptide synthetase ucdA.